The chain runs to 360 residues: Peptide chain release factor 1 (360 aa).

Gln235 bears the N5-methylglutamine mark. Residues 284–293 (QRRQQEESST) are compositionally biased toward basic and acidic residues. A disordered region spans residues 284–311 (QRRQQEESSTRRNLLGSGDRSDRIRTYN).

The protein belongs to the prokaryotic/mitochondrial release factor family. In terms of processing, methylated by PrmC. Methylation increases the termination efficiency of RF1.

The protein localises to the cytoplasm. Functionally, peptide chain release factor 1 directs the termination of translation in response to the peptide chain termination codons UAG and UAA. This Sodalis glossinidius (strain morsitans) protein is Peptide chain release factor 1.